The primary structure comprises 545 residues: Glucose-6-phosphate isomerase (545 aa).

The Proton donor role is filled by Glu-351. Active-site residues include His-382 and Lys-510.

The protein belongs to the GPI family.

The protein localises to the cytoplasm. The enzyme catalyses alpha-D-glucose 6-phosphate = beta-D-fructose 6-phosphate. The protein operates within carbohydrate biosynthesis; gluconeogenesis. It participates in carbohydrate degradation; glycolysis; D-glyceraldehyde 3-phosphate and glycerone phosphate from D-glucose: step 2/4. Catalyzes the reversible isomerization of glucose-6-phosphate to fructose-6-phosphate. In Shewanella baltica (strain OS223), this protein is Glucose-6-phosphate isomerase.